A 467-amino-acid polypeptide reads, in one-letter code: Asparagine--tRNA ligase (467 aa).

Belongs to the class-II aminoacyl-tRNA synthetase family. As to quaternary structure, homodimer.

The protein localises to the cytoplasm. The catalysed reaction is tRNA(Asn) + L-asparagine + ATP = L-asparaginyl-tRNA(Asn) + AMP + diphosphate + H(+). This is Asparagine--tRNA ligase from Phocaeicola vulgatus (strain ATCC 8482 / DSM 1447 / JCM 5826 / CCUG 4940 / NBRC 14291 / NCTC 11154) (Bacteroides vulgatus).